The following is a 340-amino-acid chain: Small ribosomal subunit biogenesis GTPase RsgA (340 aa).

Residues Glu20–Thr34 show a composition bias toward basic and acidic residues. Residues Glu20 to Gly42 form a disordered region. The region spanning Arg116–Phe274 is the CP-type G domain. GTP-binding positions include Asn163–Asp166 and Gly216–Ser224. Cys298, Cys303, His305, and Cys311 together coordinate Zn(2+).

Belongs to the TRAFAC class YlqF/YawG GTPase family. RsgA subfamily. In terms of assembly, monomer. Associates with 30S ribosomal subunit, binds 16S rRNA. Zn(2+) is required as a cofactor.

The protein localises to the cytoplasm. In terms of biological role, one of several proteins that assist in the late maturation steps of the functional core of the 30S ribosomal subunit. Helps release RbfA from mature subunits. May play a role in the assembly of ribosomal proteins into the subunit. Circularly permuted GTPase that catalyzes slow GTP hydrolysis, GTPase activity is stimulated by the 30S ribosomal subunit. The polypeptide is Small ribosomal subunit biogenesis GTPase RsgA (Chromohalobacter salexigens (strain ATCC BAA-138 / DSM 3043 / CIP 106854 / NCIMB 13768 / 1H11)).